Consider the following 244-residue polypeptide: Probable ABC transporter ATP-binding protein p29 (244 aa).

One can recognise an ABC transporter domain in the interval 6 to 241 (LVFDQVSLRY…KLTKQKLMQI (236 aa)). 38–45 (GKSGVGKT) serves as a coordination point for ATP.

This sequence belongs to the ABC transporter superfamily.

Functionally, part of a high-affinity transport system. The polypeptide is Probable ABC transporter ATP-binding protein p29 (p29) (Mycoplasma pneumoniae (strain ATCC 29342 / M129 / Subtype 1) (Mycoplasmoides pneumoniae)).